Consider the following 303-residue polypeptide: Diaminopimelate epimerase (303 aa).

Residues Asn-15, Gln-47, and Asn-67 each contribute to the substrate site. The Proton donor role is filled by Cys-76. Residues 77-78 (GN), Asn-163, Asn-197, and 215-216 (ER) contribute to the substrate site. Catalysis depends on Cys-224, which acts as the Proton acceptor. Position 225–226 (225–226 (GS)) interacts with substrate. Residues 278–303 (FDPATGEWSRDTQGLQGSGNADRGAA) are disordered.

It belongs to the diaminopimelate epimerase family. In terms of assembly, homodimer.

It localises to the cytoplasm. It carries out the reaction (2S,6S)-2,6-diaminopimelate = meso-2,6-diaminopimelate. The protein operates within amino-acid biosynthesis; L-lysine biosynthesis via DAP pathway; DL-2,6-diaminopimelate from LL-2,6-diaminopimelate: step 1/1. Catalyzes the stereoinversion of LL-2,6-diaminopimelate (L,L-DAP) to meso-diaminopimelate (meso-DAP), a precursor of L-lysine and an essential component of the bacterial peptidoglycan. This chain is Diaminopimelate epimerase, found in Brucella melitensis biotype 1 (strain ATCC 23456 / CCUG 17765 / NCTC 10094 / 16M).